Consider the following 86-residue polypeptide: CLAVATA3/ESR (CLE)-related protein 7 (86 aa).

The signal sequence occupies residues 1-22 (MASKALLLFVMLTFLLVIEMEG). N-linked (GlcNAc...) asparagine glycosylation occurs at Asn-46. The interval 63 to 86 (VDRFSPGGPDPQHHSYPLSSKPRI) is disordered. Hydroxyproline is present on residues Pro-68 and Pro-71. Pro-71 is a glycosylation site (O-linked (Ara...) hydroxyproline).

Belongs to the CLV3/ESR signal peptide family. The O-glycosylation (arabinosylation) of the hydroxyproline Pro-71 enhances binding affinity of the CLE7p peptide for its receptor. Expressed in roots and seedlings.

It is found in the secreted. The protein resides in the extracellular space. Functionally, extracellular signal peptide that regulates cell fate. The chain is CLAVATA3/ESR (CLE)-related protein 7 from Arabidopsis thaliana (Mouse-ear cress).